The primary structure comprises 1744 residues: Tanabin (1744 aa).

The segment at 1–12 (MEGYLASVSLGE) is head. Positions 8-48 (VSLGEESTQMWSLNKRLEAYLSRVKALEEENELLRKEIHSL) are coil 1A. The 308-residue stretch at 13-320 (ESTQMWSLNK…SLLEAESTRI (308 aa)) folds into the IF rod domain. Residues 49–60 (RSSKSERCWKKK) form a linker 1 region. Residues 61 to 156 (HHEEMMKLRD…RDHEEEKALM (96 aa)) are coil 1B. Residues 157-179 (EEEIASFSQRLENFRVAPVAFKP) are linker 12. A coil 2A region spans residues 180–193 (VEVDDYARKLSEIW). The interval 194 to 199 (QGAVEE) is linker 2. Residues 200-314 (YKSEVSVLEA…EVATYRSLLE (115 aa)) form a coil 2B region. Residues 315-1744 (AESTRIYTDY…KKALRWKRMF (1430 aa)) are tail. Composition is skewed to basic and acidic residues over residues 341–371 (RRRQ…KNEL) and 785–815 (HSHH…DKSS). Disordered regions lie at residues 341 to 372 (RRRQ…NELQ), 785 to 816 (HSHH…KSSE), 976 to 996 (EENQ…DIEE), 1032 to 1093 (SMED…QQED), 1340 to 1470 (DSDL…FGDV), 1485 to 1506 (SGLA…SMEN), and 1560 to 1722 (AREK…LNGH). The segment covering 980-990 (LSENEGNQNFG) has biased composition (polar residues). A compositionally biased stretch (acidic residues) spans 1034–1056 (EDEEEQNNPETEDNIGLEQESDQ). Positions 1074-1086 (VVFKPEDMSDKSE) are enriched in basic and acidic residues. Acidic residues predominate over residues 1340-1351 (DSDLESTEEQVQ). The span at 1352 to 1367 (ETERIPFKPEDSKMEN) shows a compositional bias: basic and acidic residues. Acidic residues predominate over residues 1368–1377 (ENSESEESVD). Over residues 1386 to 1398 (HKSEEFEISKDYQ) the composition is skewed to basic and acidic residues. Acidic residues predominate over residues 1412–1421 (LEDEFEDLTE). The span at 1423–1432 (PDVHEEHQNN) shows a compositional bias: basic and acidic residues. The segment covering 1433 to 1442 (DDSGASTFIT) has biased composition (polar residues). Positions 1445 to 1460 (DEDKEREVRESVSKDE) are enriched in basic and acidic residues. The span at 1496 to 1505 (DNEESEDSME) shows a compositional bias: acidic residues. 3 stretches are compositionally biased toward polar residues: residues 1576 to 1586 (EFTNENQSASP), 1597 to 1621 (EDSV…TSIS), and 1629 to 1639 (SNISTTEQSST). The span at 1680-1691 (RSEDEELDDEGS) shows a compositional bias: acidic residues. Positions 1698–1709 (NDEKANGEHKDV) are enriched in basic and acidic residues.

Belongs to the intermediate filament family. Growth cones of embryonic vertebrate neurons.

This is Tanabin from Xenopus laevis (African clawed frog).